The sequence spans 371 residues: Glutamate 5-kinase (371 aa).

Lysine 14 provides a ligand contact to ATP. Residues serine 54, aspartate 141, and asparagine 153 each coordinate substrate. 173-174 (TD) is an ATP binding site. The PUA domain maps to 280–357 (AGSLIVDAGA…SDIEQLLGYI (78 aa)).

It belongs to the glutamate 5-kinase family.

It is found in the cytoplasm. The enzyme catalyses L-glutamate + ATP = L-glutamyl 5-phosphate + ADP. It functions in the pathway amino-acid biosynthesis; L-proline biosynthesis; L-glutamate 5-semialdehyde from L-glutamate: step 1/2. Functionally, catalyzes the transfer of a phosphate group to glutamate to form L-glutamate 5-phosphate. This Azoarcus sp. (strain BH72) protein is Glutamate 5-kinase.